A 171-amino-acid chain; its full sequence is Shikimate kinase (171 aa).

An ATP-binding site is contributed by 14–19 (GAGKST). Ser18 contacts Mg(2+). Residues Asp36, Arg60, and Gly82 each contribute to the substrate site. Arg120 provides a ligand contact to ATP. Arg139 serves as a coordination point for substrate. Gln156 provides a ligand contact to ATP.

It belongs to the shikimate kinase family. In terms of assembly, monomer. Mg(2+) is required as a cofactor.

The protein resides in the cytoplasm. The catalysed reaction is shikimate + ATP = 3-phosphoshikimate + ADP + H(+). It functions in the pathway metabolic intermediate biosynthesis; chorismate biosynthesis; chorismate from D-erythrose 4-phosphate and phosphoenolpyruvate: step 5/7. In terms of biological role, catalyzes the specific phosphorylation of the 3-hydroxyl group of shikimic acid using ATP as a cosubstrate. This is Shikimate kinase from Shewanella sediminis (strain HAW-EB3).